Reading from the N-terminus, the 528-residue chain is Inorganic phosphate transporter 1-2 (528 aa).

Residues 1–24 (MAGSQLNVLVKLDQAKTQWYHFMA) lie on the Cytoplasmic side of the membrane. The chain crosses the membrane as a helical span at residues 25-45 (IVIAGMGFFTDAYDLFCIALV). The Extracellular segment spans residues 46 to 71 (TKLLGRLYYTDITKPNPGTLPPNVSS). The helical transmembrane segment at 72-92 (AVTGVALCGTLAGQLFFGWLG) threads the bilayer. Topologically, residues 93 to 99 (DKLGRKS) are cytoplasmic. Residues 100–120 (VYGFTLILMVVCSIASGLSFG) traverse the membrane as a helical segment. Topologically, residues 121–125 (HTPKS) are extracellular. Residues 126-146 (VIATLCFFRFWLGFGIGGDYP) traverse the membrane as a helical segment. Residues 147–163 (LSATIMSEYASKKTRGA) lie on the Cytoplasmic side of the membrane. Residues 164–184 (FIAAVFAMQGFGILFGAIVAL) traverse the membrane as a helical segment. The Extracellular portion of the chain corresponds to 185 to 212 (VVSAGFRHAYPAPSYAQNPAASLAPQAD). Residues 213 to 232 (YTWRLILMFGTIPAGLTYYW) traverse the membrane as a helical segment. Residues 233 to 296 (RMKMPETARY…RQFMKRHGMH (64 aa)) are Cytoplasmic-facing. Residues 297 to 317 (LLATTSTWFLLDIAFYSQNLF) traverse the membrane as a helical segment. Residues 318–348 (QKDIFSKVGWIPPAKTMNALEELYRISRAQA) are Extracellular-facing. A helical transmembrane segment spans residues 349-369 (LIALCGTIPGYWFTVAFIDIV). At 370 to 371 (GR) the chain is on the cytoplasmic side. The chain crosses the membrane as a helical span at residues 372-392 (FWIQIMGFFMMTVFMLALGVP). Over 393–405 (YDHWTHPAHHTGF) the chain is Extracellular. Residues 406–426 (VVLYALTFFFANFGPNSTTFI) traverse the membrane as a helical segment. The Cytoplasmic segment spans residues 427–442 (VPAEIFPARLRSTCHG). The chain crosses the membrane as a helical span at residues 443–463 (ISAASGKAGAIIGAFGFLYAA). Topologically, residues 464–481 (QDQHNPDAGYSRGIGIRN) are extracellular. The chain crosses the membrane as a helical span at residues 482 to 502 (ALFVLAGTNFLGMLMTLLVPE). Topologically, residues 503-528 (SKGLSLEEMSKDNVVDETAQEAIAQA) are cytoplasmic.

It belongs to the major facilitator superfamily. Phosphate:H(+) symporter (TC 2.A.1.9) family. Expressed in the root stele and leaf phloem and xylem.

The protein resides in the membrane. Its function is as follows. Low-affinity transporter for inorganic phosphate (Pi). Involved in internal Pi transport from root to shoot. Responsible for most of the PHR2-mediated accumulation of excess shoot Pi under abundant Pi conditions, but not for PHO2-mediated accumulation of excess shoot Pi. Acts as a H(+):phosphate symporter. The polypeptide is Inorganic phosphate transporter 1-2 (PTH1-2) (Oryza sativa subsp. japonica (Rice)).